A 255-amino-acid polypeptide reads, in one-letter code: MRRALIAGNWKLNGTTQAATALATAVRDGVAANKPDCDVLVCPTFTVLSAVQGVVAGSGVDLGAQNMAVASSGAFTGEISGEMLKDVGCSYVILGHSERRTLFGETNEQVAQKVASAYRDGLTPILCVGETLEQREAEQTMQVLEQQLLACLPVLPADAAKQQQLVVAYEPVWAIGTGKVASTAQAQEAHAFIRGLLAKELGANVADAVRILYGGSMKPDNAKELLGQADVDGGLIGGAALKANDFLAIMDGLTA.

Residue 9–11 (NWK) participates in substrate binding. H96 functions as the Electrophile in the catalytic mechanism. Residue E170 is the Proton acceptor of the active site. Substrate-binding positions include G176, S216, and 237 to 238 (GG).

This sequence belongs to the triosephosphate isomerase family. In terms of assembly, homodimer.

The protein localises to the cytoplasm. It carries out the reaction D-glyceraldehyde 3-phosphate = dihydroxyacetone phosphate. The protein operates within carbohydrate biosynthesis; gluconeogenesis. It functions in the pathway carbohydrate degradation; glycolysis; D-glyceraldehyde 3-phosphate from glycerone phosphate: step 1/1. Its function is as follows. Involved in the gluconeogenesis. Catalyzes stereospecifically the conversion of dihydroxyacetone phosphate (DHAP) to D-glyceraldehyde-3-phosphate (G3P). This Magnetococcus marinus (strain ATCC BAA-1437 / JCM 17883 / MC-1) protein is Triosephosphate isomerase.